A 421-amino-acid polypeptide reads, in one-letter code: Tyrosine--tRNA ligase (421 aa).

An L-tyrosine-binding site is contributed by Tyr35. A 'HIGH' region motif is present at residues 40-49 (PTADSLHIGH). L-tyrosine contacts are provided by Tyr170 and Gln174. The 'KMSKS' region motif lies at 232–236 (KFGKT). Lys235 contacts ATP. The 67-residue stretch at 355–421 (LSLVDVLVES…GKKKYFLITY (67 aa)) folds into the S4 RNA-binding domain.

Belongs to the class-I aminoacyl-tRNA synthetase family. TyrS type 1 subfamily. In terms of assembly, homodimer.

The protein localises to the cytoplasm. It carries out the reaction tRNA(Tyr) + L-tyrosine + ATP = L-tyrosyl-tRNA(Tyr) + AMP + diphosphate + H(+). Catalyzes the attachment of tyrosine to tRNA(Tyr) in a two-step reaction: tyrosine is first activated by ATP to form Tyr-AMP and then transferred to the acceptor end of tRNA(Tyr). The chain is Tyrosine--tRNA ligase from Bacillus velezensis (strain DSM 23117 / BGSC 10A6 / LMG 26770 / FZB42) (Bacillus amyloliquefaciens subsp. plantarum).